The following is a 389-amino-acid chain: Urea transporter 1 (389 aa).

5 helical membrane-spanning segments follow: residues 53–73 (PVVL…VFVN), 91–110 (WWAL…ALLL), 116–136 (LIAS…MAVF), 143–163 (FWWL…FSSA), and 173–193 (LPVF…ATGH). Asparagine 211 is a glycosylation site (N-linked (GlcNAc...) asparagine). 4 helical membrane passes run 242 to 262 (GGIF…HAAI), 281 to 301 (IYFG…GGMF), 310 to 330 (LLAL…ANFM), and 333 to 353 (VGLP…LIMT).

Belongs to the urea transporter family. In terms of assembly, homotrimer; each subunit contains a pore through which urea permeates. Identified in a complex with STOM. Detected in erythrocytes (at protein level). Expressed in spleen erythroblasts and tumoral kidney.

It is found in the cell membrane. It localises to the basolateral cell membrane. It catalyses the reaction urea(in) = urea(out). Inhibited by phloretin and para-chloromercuribenzene sulfonate. Mediates the transport of urea driven by a concentration gradient across the cell membrane of erythrocytes. Also mediates the transport of urea across the cell membrane of the renal inner medullary collecting duct which is critical to the urinary concentrating mechanism. Facilitates water transport in erythrocytes. In Homo sapiens (Human), this protein is Urea transporter 1 (SLC14A1).